The following is a 117-amino-acid chain: Transcription elongation factor SPT4-B (117 aa).

The tract at residues 1 to 40 is interaction with SUPT5H; it reads MALETVPKDLRHLRACLLCSLVKTIDQFEYDGCDNCDAYL. The C4-type zinc finger occupies 16–36; the sequence is CLLCSLVKTIDQFEYDGCDNC.

The protein belongs to the SPT4 family. As to quaternary structure, interacts with SUPT5H to form DSIF. DSIF interacts with the positive transcription elongation factor b complex (P-TEFb complex), which is composed of CDK9 and cyclin-T (CCNT1 or CCNT2). DSIF interacts with RNA polymerase II, and this interaction is reduced by phosphorylation of the C-terminal domain (CTD) of POLR2A by P-TEFb. DSIF also interacts with the NELF complex, which is composed of WHSC2/NELFA, COBRA1/NELFB, TH1L/NELFD and RDBP/NELFE, and this interaction occurs following prior binding of DSIF to RNA polymerase II. DSIF also interacts with HRMT1L2/PRMT1, HTATSF1/TATSF1, RNGTT/CAP1A, SKB1/PRMT5, SUPT6H, and can interact with PIN1. Ubiquitinated by Ubr5 when not assembled in the DSIF complex, leading to its degradation: Ubr5 recognizes and binds a degron that is not accessible when Supt4h1b is part of the DSIF complex. In terms of tissue distribution, expressed in brain, heart and liver.

The protein resides in the nucleus. Component of the DRB sensitivity-inducing factor complex (DSIF complex), which regulates mRNA processing and transcription elongation by RNA polymerase II. DSIF positively regulates mRNA capping by stimulating the mRNA guanylyltransferase activity of RNGTT/CAP1A. DSIF also acts cooperatively with the negative elongation factor complex (NELF complex) to enhance transcriptional pausing at sites proximal to the promoter. Transcriptional pausing may facilitate the assembly of an elongation competent RNA polymerase II complex. DSIF and NELF promote pausing by inhibition of the transcription elongation factor TFIIS/S-II. TFIIS/S-II binds to RNA polymerase II at transcription pause sites and stimulates the weak intrinsic nuclease activity of the enzyme. Cleavage of blocked transcripts by RNA polymerase II promotes the resumption of transcription from the new 3' terminus and may allow repeated attempts at transcription through natural pause sites. This is Transcription elongation factor SPT4-B (Supt4h1b) from Mus musculus (Mouse).